Reading from the N-terminus, the 78-residue chain is Large ribosomal subunit protein bL28 (78 aa).

It belongs to the bacterial ribosomal protein bL28 family.

The chain is Large ribosomal subunit protein bL28 from Pectobacterium atrosepticum (strain SCRI 1043 / ATCC BAA-672) (Erwinia carotovora subsp. atroseptica).